Reading from the N-terminus, the 276-residue chain is Rhomboid protease GlpG (276 aa).

A run of 6 helical transmembrane segments spans residues 94–114 (GPVT…MSLI), 142–162 (IFMH…WYLG), 169–189 (LGSG…GYVQ), 192–212 (FSGP…GYVW), 229–249 (LIIF…GMSM), and 250–270 (ANGA…VDTL). The Nucleophile role is filled by Ser-201. His-254 is a catalytic residue.

Belongs to the peptidase S54 family.

The protein resides in the cell inner membrane. The catalysed reaction is Cleaves type-1 transmembrane domains using a catalytic dyad composed of serine and histidine that are contributed by different transmembrane domains.. Its function is as follows. Rhomboid-type serine protease that catalyzes intramembrane proteolysis. The sequence is that of Rhomboid protease GlpG from Salmonella dublin (strain CT_02021853).